The following is a 70-amino-acid chain: DNA-directed RNA polymerase subunit omega (70 aa).

Belongs to the RNA polymerase subunit omega family. The RNAP catalytic core consists of 2 alpha, 1 beta, 1 beta' and 1 omega subunit. When a sigma factor is associated with the core the holoenzyme is formed, which can initiate transcription.

It catalyses the reaction RNA(n) + a ribonucleoside 5'-triphosphate = RNA(n+1) + diphosphate. In terms of biological role, promotes RNA polymerase assembly. Latches the N- and C-terminal regions of the beta' subunit thereby facilitating its interaction with the beta and alpha subunits. The sequence is that of DNA-directed RNA polymerase subunit omega from Methylobacillus flagellatus (strain ATCC 51484 / DSM 6875 / VKM B-1610 / KT).